A 1234-amino-acid chain; its full sequence is ATP-dependent helicase/nuclease subunit A (1234 aa).

The 474-residue stretch at 2 to 475 (TQFTTSQQAA…IILAENFRST (474 aa)) folds into the UvrD-like helicase ATP-binding domain. An ATP-binding site is contributed by 23 to 30 (ASAGSGKT). In terms of domain architecture, UvrD-like helicase C-terminal spans 507–806 (YGALDYGDAH…KLMTIHKSKG (300 aa)).

Belongs to the helicase family. AddA subfamily. Heterodimer of AddA and AddB/RexB. The cofactor is Mg(2+).

The enzyme catalyses Couples ATP hydrolysis with the unwinding of duplex DNA by translocating in the 3'-5' direction.. It carries out the reaction ATP + H2O = ADP + phosphate + H(+). Functionally, the heterodimer acts as both an ATP-dependent DNA helicase and an ATP-dependent, dual-direction single-stranded exonuclease. Recognizes the chi site generating a DNA molecule suitable for the initiation of homologous recombination. The AddA nuclease domain is required for chi fragment generation; this subunit has the helicase and 3' -&gt; 5' nuclease activities. This Lacticaseibacillus paracasei (strain ATCC 334 / BCRC 17002 / CCUG 31169 / CIP 107868 / KCTC 3260 / NRRL B-441) (Lactobacillus paracasei) protein is ATP-dependent helicase/nuclease subunit A.